The chain runs to 217 residues: Yop proteins translocation protein R (217 aa).

Transmembrane regions (helical) follow at residues 11–31 (IIVLSLLTLLPLISVMATSFV), 53–73 (MAMYGLAIILSLYVMAPVGFA), 157–177 (IGFLIYLPFIVIDLVISNILL), and 181–201 (MMMVSPMTISLPFKLLLFVLL).

It belongs to the FliP/MopC/SpaP family.

It is found in the cell membrane. Functionally, component of the yop secretion machinery. May have a role in the negative pathway regulation of yop expression controlled by calcium. The sequence is that of Yop proteins translocation protein R (yscR) from Yersinia pestis.